Consider the following 705-residue polypeptide: Phycobiliprotein ApcE (705 aa).

A phycobilin-like 1 region spans residues 18 to 76 (QTVPGSTIVQAEQQDRFPQQGELRELSSYFQSGLKRLAIAEIITRNSDTIVSRAANRIF). Positions 77–145 (VGGSPLAYIE…VRIPSGFRPI (69 aa)) are phycobilin-like loop. Residues 146–238 (NVARYGPRNM…YFDVLIREFE (93 aa)) form a phycobilin-like 2 region. Cys-196 is a binding site for (2R,3E)-phycocyanobilin. PBS-linker domains are found at residues 253-433 (DQQG…FVKV) and 514-691 (KIFK…SLRP). The disordered stretch occupies residues 685–705 (VKASLRPAAGAQERRPEVGRR). Residues 696–705 (QERRPEVGRR) are compositionally biased toward basic and acidic residues.

The protein belongs to the phycobilisome linker protein family. As to quaternary structure, phycobilisomes of this organism are composed of a two cylinder core, from which six rods radiate. The core is mainly composed of allophycocyanin alpha and beta chains, and of three minor components: the allophycocyanin alpha-B chain, a 18.3 kDa polypeptide, and the anchor polypeptide L-CM. Post-translationally, contains one covalently linked bilin chromophore. This protein autochromophorylates.

It localises to the cellular thylakoid membrane. In terms of biological role, this protein is postulated to act both as terminal energy acceptor (by its phycobilin-like domains) and as a linker polypeptide (by its repeats and arms) that stabilizes the phycobilisome core architecture. Has intrinsic bilin lyase activity. The protein is Phycobiliprotein ApcE (apcE) of Synechococcus sp. (strain ATCC 27144 / PCC 6301 / SAUG 1402/1) (Anacystis nidulans).